A 575-amino-acid chain; its full sequence is Transcription factor COE2 (575 aa).

The interval 62-65 (RKSN) is interaction with DNA. Residues 150 to 169 (CRVLLTHEVMCSRCCEKKSC) form a C5-type zinc finger. Interaction with DNA stretches follow at residues 196 to 203 (NCLKTAGN) and 235 to 238 (NNSK). The IPT/TIG domain occupies 253-336 (PCIKAISPSE…KGAPGRFIYT (84 aa)). Residues 441–453 (STQGNNQGYIRNT) show a composition bias toward polar residues. The disordered stretch occupies residues 441 to 479 (STQGNNQGYIRNTSSISPRGYSSSSTPQQSNYSTSSNSM). The span at 454–479 (SSISPRGYSSSSTPQQSNYSTSSNSM) shows a compositional bias: low complexity.

The protein belongs to the COE family. As to quaternary structure, forms either a homodimer or a heterodimer with a related family member. Interacts with SIX1. In terms of tissue distribution, in adult expressed in olfactory epithelium and at a much lower level in Purkinje cells of the cerebellum. In embryo expressed in epithalamus, in cells near the ventricular zone of mesencephalon and on the ventral surface of rhombencephalon, in the developing vomeronasal organ, at a lower level in developing spinal cord. Not expressed in developing retina, inner ear, dorsal root ganglia, trigeminal ganglia and glossopharyngeal ganglia.

The protein resides in the nucleus. Its function is as follows. Transcription factor that, in osteoblasts, activates the decoy receptor for RANKL, TNFRSF11B, which in turn regulates osteoclast differentiation. Acts in synergy with the Wnt-responsive LEF1/CTNNB1 pathway. Recognizes variations of the palindromic sequence 5'-ATTCCCNNGGGAATT-3'. The polypeptide is Transcription factor COE2 (Ebf2) (Mus musculus (Mouse)).